Here is a 326-residue protein sequence, read N- to C-terminus: Probable GTP 3',8-cyclase (326 aa).

The region spanning 6 to 235 is the Radical SAM core domain; that stretch reads LYGRPVLSLR…NRPRYIIRTQ (230 aa). GTP is bound at residue arginine 15. Cysteine 22, cysteine 26, and cysteine 29 together coordinate [4Fe-4S] cluster. Lysine 62 contacts GTP. Glycine 66 is a binding site for S-adenosyl-L-methionine. Threonine 92 provides a ligand contact to GTP. Serine 116 serves as a coordination point for S-adenosyl-L-methionine. Lysine 153 contacts GTP. [4Fe-4S] cluster-binding residues include cysteine 253 and cysteine 256. 258–260 is a binding site for GTP; it reads RLR. Residue cysteine 270 coordinates [4Fe-4S] cluster.

Belongs to the radical SAM superfamily. MoaA family. It depends on [4Fe-4S] cluster as a cofactor.

The enzyme catalyses GTP + AH2 + S-adenosyl-L-methionine = (8S)-3',8-cyclo-7,8-dihydroguanosine 5'-triphosphate + 5'-deoxyadenosine + L-methionine + A + H(+). The protein operates within cofactor biosynthesis; molybdopterin biosynthesis. In terms of biological role, catalyzes the cyclization of GTP to (8S)-3',8-cyclo-7,8-dihydroguanosine 5'-triphosphate. The sequence is that of Probable GTP 3',8-cyclase from Thermoplasma volcanium (strain ATCC 51530 / DSM 4299 / JCM 9571 / NBRC 15438 / GSS1).